We begin with the raw amino-acid sequence, 274 residues long: MAIVKCKPTSAGRRHVVKVVNADLHKGKPYAPLLEKNSKNGGRNNNGRITVRHIGGGHKQHYRVVDFKRTKDGIPAKVERLEYDPNRSANIALVLYADGERRYIIAPKGMQAGDVIQSGVDAPIKAGNTLPMRNIPVGSTIHCVELTPGKGAQLARSAGAYAQLVARDGSYVTIRLRSGEMRKVLSEGRATIGEVGNSEHMLRELGKAGASRWRGVRPTVRGVVMNPVDHPHGGGEGRTSGGRHPVSPWGVPTKGYKTRSNKRTDKYIVRRRNK.

The tract at residues 223–265 is disordered; the sequence is VVMNPVDHPHGGGEGRTSGGRHPVSPWGVPTKGYKTRSNKRTD.

This sequence belongs to the universal ribosomal protein uL2 family. As to quaternary structure, part of the 50S ribosomal subunit. Forms a bridge to the 30S subunit in the 70S ribosome.

One of the primary rRNA binding proteins. Required for association of the 30S and 50S subunits to form the 70S ribosome, for tRNA binding and peptide bond formation. It has been suggested to have peptidyltransferase activity; this is somewhat controversial. Makes several contacts with the 16S rRNA in the 70S ribosome. In Vibrio vulnificus (strain CMCP6), this protein is Large ribosomal subunit protein uL2.